The chain runs to 784 residues: Lon protease (784 aa).

The Lon N-terminal domain maps to 11 to 204; sequence IPVLPLRDVV…YLMAMMESEI (194 aa). 356–363 serves as a coordination point for ATP; that stretch reads GPPGVGKT. The region spanning 592 to 773 is the Lon proteolytic domain; sequence ENRVGQVTGL…EEVLALALQN (182 aa). Residues serine 679 and lysine 722 contribute to the active site.

It belongs to the peptidase S16 family. Homohexamer. Organized in a ring with a central cavity.

It is found in the cytoplasm. It carries out the reaction Hydrolysis of proteins in presence of ATP.. ATP-dependent serine protease that mediates the selective degradation of mutant and abnormal proteins as well as certain short-lived regulatory proteins. Required for cellular homeostasis and for survival from DNA damage and developmental changes induced by stress. Degrades polypeptides processively to yield small peptide fragments that are 5 to 10 amino acids long. Binds to DNA in a double-stranded, site-specific manner. The sequence is that of Lon protease from Erwinia amylovora (Fire blight bacteria).